We begin with the raw amino-acid sequence, 27 residues long: Phospholipase A2 2 (27 aa).

A disordered region spans residues 1-27 (FMKVIDPGTKWCGPGNKAADDTDNGKN). The Ca(2+) site is built by W11, G13, and G15. Residues 18–27 (AADDTDNGKN) show a composition bias toward basic and acidic residues.

This sequence belongs to the phospholipase A2 family. Ca(2+) is required as a cofactor. In terms of tissue distribution, expressed by the venom gland.

Its subcellular location is the secreted. The catalysed reaction is a 1,2-diacyl-sn-glycero-3-phosphocholine + H2O = a 1-acyl-sn-glycero-3-phosphocholine + a fatty acid + H(+). PLA2 catalyzes the calcium-dependent hydrolysis of the 2-acyl groups in 3-sn-phosphoglycerides. The protein is Phospholipase A2 2 of Opisthacanthus cayaporum (South American scorpion).